Consider the following 522-residue polypeptide: Cytochrome P450 monooxygenase sirB (522 aa).

A helical transmembrane segment spans residues 22-42; that stretch reads ASAILFCTLLTVFLFISQGTV. N-linked (GlcNAc...) asparagine glycosylation is present at N191. The chain crosses the membrane as a helical span at residues 304-324; sequence VLHLSFAATGTVAILITHMIY. Residue C462 coordinates heme.

This sequence belongs to the cytochrome P450 family. Requires heme as cofactor.

The protein resides in the membrane. Its pathway is mycotoxin biosynthesis. In terms of biological role, cytochrome P450 monooxygenase; part of the gene cluster that mediates the biosynthesis of sirodesmin PL, an epipolythiodioxopiperazine (ETP) characterized by a disulfide bridged cyclic dipeptide and that acts as a phytotoxin which is involved in the blackleg didease of canola. SirD catalyzes the O-prenylation of L-tyrosine (L-Tyr) in the presence of dimethylallyl diphosphate (DMAPP) to yield 4-O-dimethylallyl-L-Tyr, and therefore represents probably the first pathway-specific enzyme in the biosynthesis of sirodesmin PL. 4-O-dimethylallyl-L-Tyr, then undergoes condensation with L-Ser in a reaction catalyzed by the non-ribosomal peptide synthase sirP to form the diketopiperazine (DKP) backbone. Further bishydroxylation of the DKP performed by the cytochrome P450 monooxygenase sirC leads to the production of the intermediate phomamide. This step is essential to form the reactive thiol group required for toxicity of sirodesmin PL. The next steps of sirodesmin biosynthesis are not well understood yet, but some predictions could be made from intermediate compounds identification. Phomamide is converted into phomalizarine via oxidation, probably by sirT. Further oxidation, methylation (by sirM or sirN) and reduction steps convert phomalizarine to deacetyl sirodesmin. Finally, acetyltransferase sirH probably acetylates deacetyl sirodesmin to produce sirodesmin PL. In Leptosphaeria maculans (Blackleg fungus), this protein is Cytochrome P450 monooxygenase sirB.